Here is a 297-residue protein sequence, read N- to C-terminus: HTH-type transcriptional regulator ArgP (297 aa).

An HTH lysR-type domain is found at 4–60 (PDYRTLQALDAVIRERGFERAAQKLCITQSAVSQRIKQLENLFGQPLLVRTVPPRPT). A DNA-binding region (H-T-H motif) is located at residues 21–40 (FERAAQKLCITQSAVSQRIK).

Belongs to the LysR transcriptional regulatory family. As to quaternary structure, homodimer.

Controls the transcription of genes involved in arginine and lysine metabolism. This Serratia proteamaculans (strain 568) protein is HTH-type transcriptional regulator ArgP.